The primary structure comprises 292 residues: MIAGSMVALVTPMDAQGRLDWDSLSKLVDFHLQEGTNAIVAVGTTGESATLDVSEHIEVIRRVVAQVAGRIPVIAGTGANSTREAVELTTNAKTAGADACLLVTPYYNKPTQEGLFQHFSHIANAVDIPQILYNVPGRTACDMLPETVARLSTVKNIIGIKEATGNLQRAKDILASVSSDFLVYSGDDATAVELMLLGGKGNISVTANVAPRLMSDLCAAAMRGDAETARAIHEKLMPLNNTLFIESNPIPVKWALHEMGKMPAGIRLPLTWLSEACHEPLRQALRQSGVLV.

Residue T45 participates in pyruvate binding. Y133 (proton donor/acceptor) is an active-site residue. The active-site Schiff-base intermediate with substrate is the K161. Residue I203 coordinates pyruvate.

It belongs to the DapA family. As to quaternary structure, homodimer.

It localises to the cytoplasm. It catalyses the reaction L-aspartate 4-semialdehyde + pyruvate = (2S,4S)-4-hydroxy-2,3,4,5-tetrahydrodipicolinate + H2O + H(+). It functions in the pathway amino-acid biosynthesis; L-lysine biosynthesis via DAP pathway; (S)-tetrahydrodipicolinate from L-aspartate: step 3/4. Functionally, catalyzes the condensation of (S)-aspartate-beta-semialdehyde [(S)-ASA] and pyruvate to 4-hydroxy-tetrahydrodipicolinate (HTPA). The polypeptide is 4-hydroxy-tetrahydrodipicolinate synthase (Pseudomonas savastanoi pv. phaseolicola (strain 1448A / Race 6) (Pseudomonas syringae pv. phaseolicola (strain 1448A / Race 6))).